An 82-amino-acid chain; its full sequence is Small ribosomal subunit protein bS20 (82 aa).

Belongs to the bacterial ribosomal protein bS20 family.

Its function is as follows. Binds directly to 16S ribosomal RNA. This Streptococcus suis (strain 98HAH33) protein is Small ribosomal subunit protein bS20.